Consider the following 510-residue polypeptide: Inositol-3-phosphate synthase (510 aa).

Gly-70, Gly-71, Asn-72, Asn-73, Asp-143, Ile-180, Gln-190, Arg-193, Thr-230, Ala-231, Asn-232, Thr-233, Gly-281, Ser-282, Asp-306, Ser-309, Asn-340, Asn-341, Asp-342, Lys-355, Gly-393, Asp-394, Asp-422, and Ser-423 together coordinate NAD(+).

It belongs to the myo-inositol 1-phosphate synthase family. The cofactor is NAD(+).

The protein localises to the cytoplasm. Its subcellular location is the cytosol. It localises to the nucleus. It catalyses the reaction D-glucose 6-phosphate = 1D-myo-inositol 3-phosphate. Its pathway is polyol metabolism; myo-inositol biosynthesis; myo-inositol from D-glucose 6-phosphate: step 1/2. Its function is as follows. Key enzyme in myo-inositol biosynthesis pathway that catalyzes the conversion of glucose 6-phosphate to 1-myo-inositol 1-phosphate in a NAD-dependent manner. The sequence is that of Inositol-3-phosphate synthase from Zea mays (Maize).